A 238-amino-acid polypeptide reads, in one-letter code: ATP synthase subunit a (238 aa).

Helical transmembrane passes span 18–38 (LTLL…VFWA), 76–96 (YSLL…LGLF), 114–134 (NLAF…IEGV), 166–186 (SLAI…GLIV), and 193–213 (VYWW…SVFI).

Belongs to the ATPase A chain family. F-type ATPases have 2 components, CF(1) - the catalytic core - and CF(0) - the membrane proton channel. CF(1) has five subunits: alpha(3), beta(3), gamma(1), delta(1), epsilon(1). CF(0) has three main subunits: a(1), b(2) and c(9-12). The alpha and beta chains form an alternating ring which encloses part of the gamma chain. CF(1) is attached to CF(0) by a central stalk formed by the gamma and epsilon chains, while a peripheral stalk is formed by the delta and b chains.

Its subcellular location is the cell membrane. Functionally, key component of the proton channel; it plays a direct role in the translocation of protons across the membrane. The chain is ATP synthase subunit a from Streptococcus pyogenes serotype M49 (strain NZ131).